Reading from the N-terminus, the 829-residue chain is Periplasmic nitrate reductase (829 aa).

The segment at residues 1–29 is a signal peptide (tat-type signal); it reads MKMTRRAFVKANAAASAAAVAGVTLPASA. The 4Fe-4S Mo/W bis-MGD-type domain occupies 41 to 97; the sequence is IKWDKAPCRFCGTGCSVLVGTQNGRVVATQGDPEAPVNKGLNCIKGYFLSKIMYGKD. Residues cysteine 48, cysteine 51, cysteine 55, and cysteine 83 each coordinate [4Fe-4S] cluster. Residues lysine 85, glutamine 152, asparagine 177, cysteine 181, 214-221, 245-249, 264-266, methionine 374, glutamine 378, asparagine 484, 510-511, lysine 533, aspartate 560, and 718-727 each bind Mo-bis(molybdopterin guanine dinucleotide); these read WGSNMAEM, STYYH, QSD, SD, and TGRVLEHWHT. A substrate-binding site is contributed by phenylalanine 794. Mo-bis(molybdopterin guanine dinucleotide) is bound by residues asparagine 802 and lysine 819.

It belongs to the prokaryotic molybdopterin-containing oxidoreductase family. NasA/NapA/NarB subfamily. In terms of assembly, component of the periplasmic nitrate reductase NapAB complex composed of NapA and NapB. [4Fe-4S] cluster serves as cofactor. The cofactor is Mo-bis(molybdopterin guanine dinucleotide). Predicted to be exported by the Tat system. The position of the signal peptide cleavage has not been experimentally proven.

The protein localises to the periplasm. The catalysed reaction is 2 Fe(II)-[cytochrome] + nitrate + 2 H(+) = 2 Fe(III)-[cytochrome] + nitrite + H2O. In terms of biological role, catalytic subunit of the periplasmic nitrate reductase complex NapAB. Receives electrons from NapB and catalyzes the reduction of nitrate to nitrite. The sequence is that of Periplasmic nitrate reductase from Aliivibrio fischeri (strain ATCC 700601 / ES114) (Vibrio fischeri).